Here is a 1135-residue protein sequence, read N- to C-terminus: Potassium channel subfamily T member 2 (1135 aa).

The Cytoplasmic segment spans residues 1 to 63 (MVDLESEVPP…KNQRSSLRIR (63 aa)). The helical transmembrane segment at 64 to 84 (LFNFSLKLLSCLLYIIRVLLE) threads the bilayer. The Extracellular portion of the chain corresponds to 85–101 (NPSQGNEWSHIFWVNRS). N-linked (GlcNAc...) asparagine glycosylation is present at Asn99. A helical membrane pass occupies residues 102–122 (LPLWGLQVSVALISLFETILL). The Cytoplasmic portion of the chain corresponds to 123-137 (GYLSYKGNIWEQILR). A helical transmembrane segment spans residues 138 to 158 (IPFILEIINAVPFIISIFWPS). At 159–164 (LRNLFV) the chain is on the extracellular side. Residues 165 to 185 (PVFLNCWLAKHALENMINDLH) form a helical membrane-spanning segment. Residues 186-198 (RAIQRTQSAMFNQ) are Cytoplasmic-facing. A helical membrane pass occupies residues 199–219 (VLILISTLLCLIFTCICGIQH). The Extracellular portion of the chain corresponds to 220–228 (LERIGKKLN). Positions 229–249 (LFDSLYFCIVTFSTVGFGDVT) form an intramembrane region, pore-forming. Over 250-256 (PETWSSK) the chain is Extracellular. Residues 257–277 (LFVVAMICVALVVLPIQFEQL) form a helical membrane-spanning segment. Residues 278–1135 (AYLWMERQKS…GQDSREETQL (858 aa)) lie on the Cytoplasmic side of the membrane. RCK N-terminal domains follow at residues 299–435 (EKHV…DHVV) and 718–858 (NKLI…CYSL). Disordered regions lie at residues 977-1010 (VEEW…HPLL), 1017-1036 (WARR…AEKI), and 1113-1135 (SEPS…ETQL). Residues 1017 to 1030 (WARRLSRKGPKHSG) show a composition bias toward basic residues. Residues 1118–1127 (RNSICNVTGQ) are compositionally biased toward polar residues.

It belongs to the potassium channel family. Calcium-activated (TC 1.A.1.3) subfamily. KCa4.2/KCNT2 sub-subfamily. As to quaternary structure, homotetramer. Forms heteromeric channels with KCNT1; these heterodimer channels differ from the homomers in their unitary conductance, kinetic behavior, subcellular localization, and response to activation of protein kinase C. Phosphorylated by protein kinase C. Phosphorylation of the C-terminal domain inhibits channel activity.

It localises to the cell membrane. The enzyme catalyses K(+)(in) = K(+)(out). Are normally in a closed state unless activated by an increase in intracellular Na(+) and Cl(-). Inhibited upon stimulation of G-protein coupled receptors, such as CHRM1 and GRM1. There is conflicting data about the effect of ATP on KNCT2 channels activity. Intracellular ATP was initially report to inhibit the channel activity. However, others studies conclude that KNCT2 channels are not inhibited by intracellular ATP. Functionally, sodium-activated and chloride-activated potassium channel. Produces rapidly activating outward rectifier K(+) currents. Contributes to regulate neuronal excitability. The polypeptide is Potassium channel subfamily T member 2 (KCNT2) (Homo sapiens (Human)).